A 512-amino-acid chain; its full sequence is Glycerol kinase, glycosomal (512 aa).

Residue T11 participates in substrate binding. Residue R15 coordinates ATP. 3 residues coordinate substrate: R84, Y139, and D254. Residues T276, G321, and 422–426 each bind ATP; that span reads GLSKN. Residues 510-512 carry the Microbody targeting signal motif; sequence AKL.

It belongs to the FGGY kinase family.

It is found in the glycosome. It catalyses the reaction glycerol + ATP = sn-glycerol 3-phosphate + ADP + H(+). It functions in the pathway polyol metabolism; glycerol degradation via glycerol kinase pathway; sn-glycerol 3-phosphate from glycerol: step 1/1. In terms of biological role, catalyzes the phosphorylation of glycerol using ATP. Under anoxic conditions, when glycerol 3-phosphate accumulates in the glycosome, it catalyzes the reverse reaction, maintaining the ATP balance. Key enzyme for the survival of bloodstream forms under anoxic conditions. This is Glycerol kinase, glycosomal (GK) from Trypanosoma brucei brucei.